Reading from the N-terminus, the 232-residue chain is Small ribosomal subunit protein uS3 (232 aa).

The 69-residue stretch at 39 to 107 folds into the KH type-2 domain; the sequence is VRQFLTKELS…PAQINIAEVR (69 aa).

This sequence belongs to the universal ribosomal protein uS3 family. As to quaternary structure, part of the 30S ribosomal subunit. Forms a tight complex with proteins S10 and S14.

Functionally, binds the lower part of the 30S subunit head. Binds mRNA in the 70S ribosome, positioning it for translation. The chain is Small ribosomal subunit protein uS3 from Sodalis glossinidius (strain morsitans).